Here is a 154-residue protein sequence, read N- to C-terminus: L-alanine exporter AlaE (154 aa).

Transmembrane regions (helical) follow at residues 21–41 (FAMVVYCTVVNMLIEIFLSGM), 51–71 (LVAIPVNILIACPYGIYRDFF), 90–110 (ILAYVTFQSPVYAAILWVIGA), and 115–135 (IVAAVSSNMVISMMMGAVYGY).

Belongs to the AlaE exporter family.

The protein localises to the cell inner membrane. Functionally, exports L-alanine. This Escherichia fergusonii (strain ATCC 35469 / DSM 13698 / CCUG 18766 / IAM 14443 / JCM 21226 / LMG 7866 / NBRC 102419 / NCTC 12128 / CDC 0568-73) protein is L-alanine exporter AlaE.